Reading from the N-terminus, the 120-residue chain is Large ribosomal subunit protein uL22 (120 aa).

A disordered region spans residues 1–25 (MFVNKKYTAKGKNLPSSPKKVRPIA).

It belongs to the universal ribosomal protein uL22 family. Part of the 50S ribosomal subunit.

In terms of biological role, this protein binds specifically to 23S rRNA; its binding is stimulated by other ribosomal proteins, e.g. L4, L17, and L20. It is important during the early stages of 50S assembly. It makes multiple contacts with different domains of the 23S rRNA in the assembled 50S subunit and ribosome. Functionally, the globular domain of the protein is located near the polypeptide exit tunnel on the outside of the subunit, while an extended beta-hairpin is found that lines the wall of the exit tunnel in the center of the 70S ribosome. This chain is Large ribosomal subunit protein uL22, found in Borrelia recurrentis (strain A1).